A 405-amino-acid polypeptide reads, in one-letter code: Probable tRNA sulfurtransferase (405 aa).

Residues 60–165 (TEVDKRLKKV…QDAVYISNQL (106 aa)) form the THUMP domain. ATP is bound by residues 183 to 184 (ML), 208 to 209 (HF), Arg-265, Gly-287, and Gln-296.

This sequence belongs to the ThiI family.

It localises to the cytoplasm. The catalysed reaction is [ThiI sulfur-carrier protein]-S-sulfanyl-L-cysteine + a uridine in tRNA + 2 reduced [2Fe-2S]-[ferredoxin] + ATP + H(+) = [ThiI sulfur-carrier protein]-L-cysteine + a 4-thiouridine in tRNA + 2 oxidized [2Fe-2S]-[ferredoxin] + AMP + diphosphate. The enzyme catalyses [ThiS sulfur-carrier protein]-C-terminal Gly-Gly-AMP + S-sulfanyl-L-cysteinyl-[cysteine desulfurase] + AH2 = [ThiS sulfur-carrier protein]-C-terminal-Gly-aminoethanethioate + L-cysteinyl-[cysteine desulfurase] + A + AMP + 2 H(+). It participates in cofactor biosynthesis; thiamine diphosphate biosynthesis. Catalyzes the ATP-dependent transfer of a sulfur to tRNA to produce 4-thiouridine in position 8 of tRNAs, which functions as a near-UV photosensor. Also catalyzes the transfer of sulfur to the sulfur carrier protein ThiS, forming ThiS-thiocarboxylate. This is a step in the synthesis of thiazole, in the thiamine biosynthesis pathway. The sulfur is donated as persulfide by IscS. In Lactobacillus acidophilus (strain ATCC 700396 / NCK56 / N2 / NCFM), this protein is Probable tRNA sulfurtransferase.